The following is a 240-amino-acid chain: uncharacterized protein (240 aa).

A disordered region spans residues 1 to 27; it reads MKDLQKKSSVRRQITNEDDERYGEDSI. Phosphoserine is present on residues Ser-59 and Ser-95. The interval 189 to 227 is disordered; the sequence is RTPSPTGKSVGDEATSNNMHSSSAIRNPNGPTVDPEEGK. Positions 202 to 218 are enriched in polar residues; the sequence is ATSNNMHSSSAIRNPNG.

This is an uncharacterized protein from Saccharomyces cerevisiae (strain ATCC 204508 / S288c) (Baker's yeast).